Consider the following 342-residue polypeptide: L-threonine 3-dehydrogenase (342 aa).

Cys38 contacts Zn(2+). Active-site charge relay system residues include Thr40 and His43. Zn(2+)-binding residues include His63, Glu64, Cys93, Cys96, Cys99, and Cys107. Residues Ile175, Asp195, Arg200, 262 to 264 (LGI), and 286 to 287 (IY) each bind NAD(+).

Belongs to the zinc-containing alcohol dehydrogenase family. Homotetramer. Zn(2+) serves as cofactor.

The protein resides in the cytoplasm. It catalyses the reaction L-threonine + NAD(+) = (2S)-2-amino-3-oxobutanoate + NADH + H(+). The protein operates within amino-acid degradation; L-threonine degradation via oxydo-reductase pathway; glycine from L-threonine: step 1/2. Catalyzes the NAD(+)-dependent oxidation of L-threonine to 2-amino-3-ketobutyrate. The chain is L-threonine 3-dehydrogenase from Burkholderia multivorans (strain ATCC 17616 / 249).